A 147-amino-acid chain; its full sequence is MYFEEGRLFFIKSQFNGRVLDVEDGSTEDDANIIVYTQKYEDCLNQLWRYENGYFINAKSAKVLDIRGGEMQPESQIIQYAQKMVEEAANQRWAIDEDGYIFCEARPDLVLDIQGAEDEDCVPVILYERREGEVSANQRWELVPFEG.

One can recognise a Ricin B-type lectin domain in the interval 4 to 143; the sequence is EEGRLFFIKS…VSANQRWELV (140 aa).

The protein belongs to the ribosome-inactivating protein family. Type 1 RIP subfamily.

It localises to the secreted. The catalysed reaction is Endohydrolysis of the N-glycosidic bond at one specific adenosine on the 28S rRNA.. N-glycosylase that inhibits protein synthesis in the host by depurinating ribosomal rRNA, and thus acts as a ribosomal inactivating protein (RIP). Promotes vascular permeability in the host and induces necrosis and apoptosis of host alveolar epithelial cells. This is Mucoricin from Rhizopus delemar (strain RA 99-880 / ATCC MYA-4621 / FGSC 9543 / NRRL 43880) (Mucormycosis agent).